We begin with the raw amino-acid sequence, 86 residues long: Mu-theraphotoxin-Cg2a 1 (86 aa).

The first 21 residues, 1 to 21 (MKVSVVITLAVLGIMFVWASA), serve as a signal peptide directing secretion. A propeptide spanning residues 22–50 (AELEERGSDQRDSPAWLKSMERIFQSEER) is cleaved from the precursor. 3 cysteine pairs are disulfide-bonded: cysteine 52–cysteine 66, cysteine 59–cysteine 71, and cysteine 65–cysteine 78. Position 84 is a phenylalanine amide (phenylalanine 84).

Belongs to the neurotoxin 10 (Hwtx-1) family. 37 (Jztx-31) subfamily. As to expression, expressed by the venom gland.

Its subcellular location is the secreted. Its function is as follows. Inhibits both peak current and fast inactivation of voltage-gated sodium channels (Nav) channels. Inhibits the inactivation of Nav on DRG neurons (EC(50)=1.77 uM) and peak current of cardiac myocytes (IC(50)=0.90 uM). The sequence is that of Mu-theraphotoxin-Cg2a 1 from Chilobrachys guangxiensis (Chinese earth tiger tarantula).